The sequence spans 440 residues: Glutamyl-tRNA reductase (440 aa).

Substrate-binding positions include 50-53 (TCNR), Ser109, 114-116 (EPQ), and Gln120. The Nucleophile role is filled by Cys51. Residue 189–194 (GAGEMA) participates in NADP(+) binding.

It belongs to the glutamyl-tRNA reductase family. In terms of assembly, homodimer.

It catalyses the reaction (S)-4-amino-5-oxopentanoate + tRNA(Glu) + NADP(+) = L-glutamyl-tRNA(Glu) + NADPH + H(+). Its pathway is porphyrin-containing compound metabolism; protoporphyrin-IX biosynthesis; 5-aminolevulinate from L-glutamyl-tRNA(Glu): step 1/2. Catalyzes the NADPH-dependent reduction of glutamyl-tRNA(Glu) to glutamate 1-semialdehyde (GSA). This Nitratidesulfovibrio vulgaris (strain DP4) (Desulfovibrio vulgaris) protein is Glutamyl-tRNA reductase.